The following is a 304-amino-acid chain: N-acetyl-D-glucosamine kinase (304 aa).

Residues 4–11 (GLDIGGTK) and 133–140 (GFGGGFVL) each bind ATP. Positions 157, 178, 180, and 185 each coordinate Zn(2+).

Belongs to the ROK (NagC/XylR) family. NagK subfamily.

The catalysed reaction is N-acetyl-D-glucosamine + ATP = N-acetyl-D-glucosamine 6-phosphate + ADP + H(+). Its pathway is cell wall biogenesis; peptidoglycan recycling. In terms of biological role, catalyzes the phosphorylation of N-acetyl-D-glucosamine (GlcNAc) derived from cell-wall degradation, yielding GlcNAc-6-P. This Haemophilus influenzae (strain 86-028NP) protein is N-acetyl-D-glucosamine kinase.